Consider the following 471-residue polypeptide: Adenosylhomocysteinase (471 aa).

Residues Thr-60, Asp-135, and Glu-196 each coordinate substrate. Thr-197–Thr-199 is a binding site for NAD(+). The substrate site is built by Lys-226 and Asp-230. NAD(+) is bound by residues Asn-231, Gly-260 to Gly-265, Glu-283, Asn-318, Ile-339 to His-341, and Asn-387.

This sequence belongs to the adenosylhomocysteinase family. The cofactor is NAD(+).

The protein localises to the cytoplasm. The catalysed reaction is S-adenosyl-L-homocysteine + H2O = L-homocysteine + adenosine. It participates in amino-acid biosynthesis; L-homocysteine biosynthesis; L-homocysteine from S-adenosyl-L-homocysteine: step 1/1. May play a key role in the regulation of the intracellular concentration of adenosylhomocysteine. The chain is Adenosylhomocysteinase from Chlorobium limicola (strain DSM 245 / NBRC 103803 / 6330).